A 543-amino-acid chain; its full sequence is CTP synthase (543 aa).

The amidoligase domain stretch occupies residues 1–265 (MTRYIFVTGG…DDFVVERFGL (265 aa)). Position 13 (Ser13) interacts with CTP. Ser13 serves as a coordination point for UTP. ATP-binding positions include 14–19 (SLGKGI) and Asp71. Mg(2+)-binding residues include Asp71 and Glu139. Residues 146–148 (DIE), 186–191 (KTKPTQ), and Lys222 contribute to the CTP site. UTP-binding positions include 186–191 (KTKPTQ) and Lys222. Positions 290 to 541 (TIAMVGKYME…VKAALAQHQK (252 aa)) constitute a Glutamine amidotransferase type-1 domain. Residue Gly351 coordinates L-glutamine. Catalysis depends on Cys378, which acts as the Nucleophile; for glutamine hydrolysis. Residues 379 to 382 (LGMQ), Glu402, and Arg469 contribute to the L-glutamine site. Active-site residues include His514 and Glu516.

It belongs to the CTP synthase family. In terms of assembly, homotetramer.

The enzyme catalyses UTP + L-glutamine + ATP + H2O = CTP + L-glutamate + ADP + phosphate + 2 H(+). The catalysed reaction is L-glutamine + H2O = L-glutamate + NH4(+). It carries out the reaction UTP + NH4(+) + ATP = CTP + ADP + phosphate + 2 H(+). Its pathway is pyrimidine metabolism; CTP biosynthesis via de novo pathway; CTP from UDP: step 2/2. With respect to regulation, allosterically activated by GTP, when glutamine is the substrate; GTP has no effect on the reaction when ammonia is the substrate. The allosteric effector GTP functions by stabilizing the protein conformation that binds the tetrahedral intermediate(s) formed during glutamine hydrolysis. Inhibited by the product CTP, via allosteric rather than competitive inhibition. In terms of biological role, catalyzes the ATP-dependent amination of UTP to CTP with either L-glutamine or ammonia as the source of nitrogen. Regulates intracellular CTP levels through interactions with the four ribonucleotide triphosphates. The chain is CTP synthase from Pseudomonas savastanoi pv. phaseolicola (strain 1448A / Race 6) (Pseudomonas syringae pv. phaseolicola (strain 1448A / Race 6)).